The sequence spans 902 residues: Probable leucine--tRNA ligase, mitochondrial (902 aa).

An N6-acetyllysine modification is found at lysine 67. Residues 91–101 (YPSGKLHMGHV) carry the 'HIGH' region motif. The residue at position 235 (lysine 235) is an N6-acetyllysine. Positions 638–642 (KMSKS) match the 'KMSKS' region motif. Lysine 641 provides a ligand contact to ATP.

It belongs to the class-I aminoacyl-tRNA synthetase family.

The protein localises to the mitochondrion matrix. It carries out the reaction tRNA(Leu) + L-leucine + ATP = L-leucyl-tRNA(Leu) + AMP + diphosphate. The polypeptide is Probable leucine--tRNA ligase, mitochondrial (Lars2) (Mus musculus (Mouse)).